Reading from the N-terminus, the 188-residue chain is Potassium-transporting ATPase KdpC subunit (188 aa).

Residues methionine 13–alanine 33 form a helical membrane-spanning segment.

Belongs to the KdpC family. In terms of assembly, the system is composed of three essential subunits: KdpA, KdpB and KdpC.

The protein localises to the cell inner membrane. Part of the high-affinity ATP-driven potassium transport (or Kdp) system, which catalyzes the hydrolysis of ATP coupled with the electrogenic transport of potassium into the cytoplasm. This subunit acts as a catalytic chaperone that increases the ATP-binding affinity of the ATP-hydrolyzing subunit KdpB by the formation of a transient KdpB/KdpC/ATP ternary complex. In Gloeobacter violaceus (strain ATCC 29082 / PCC 7421), this protein is Potassium-transporting ATPase KdpC subunit.